The sequence spans 1894 residues: Fibronectin type III domain-containing protein 1 (1894 aa).

A signal peptide spans 1 to 32 (MAPEAGATLRAPRRLSWAALLLLAALLPVASS). Residues 39–131 (HPLKPRHVKL…PVYRAESPPG (93 aa)) form the Fibronectin type-III 1 domain. The N-linked (GlcNAc...) asparagine glycan is linked to Asn149. 3 consecutive Fibronectin type-III domains span residues 158 to 258 (PNKP…SEED), 262 to 357 (VPDD…TPES), and 362 to 457 (APEN…MPTT). Disordered regions lie at residues 455-500 (PTTS…PQGR), 515-1271 (ANGG…TVSP), 1311-1350 (LSRQ…IING), and 1444-1515 (THPP…CPPG). Over residues 565–574 (TLRPPSRHGH) the composition is skewed to basic residues. Residues 614–625 (PSASASPAHHAS) are compositionally biased toward low complexity. Polar residues predominate over residues 626 to 641 (TQGTSHRPSLPASLND). Composition is skewed to low complexity over residues 711-722 (SASAPPSRLSPP) and 759-778 (SRST…TQVS). Ser717 is modified (phosphoserine). The span at 786–799 (GESHGDGDREDGGR) shows a compositional bias: basic and acidic residues. 2 stretches are compositionally biased toward polar residues: residues 941-957 (KYSS…QSTD) and 1027-1060 (SPSQ…TASS). Positions 1071–1088 (QDEDAQGSYDDDSTEVEA) are enriched in acidic residues. Over residues 1166–1176 (PLSSKSQQSVS) the composition is skewed to polar residues. Positions 1197-1209 (SSSVPKWPSSSTP) are enriched in low complexity. Residues 1211 to 1226 (GGKDADGSLAKEEREP) show a composition bias toward basic and acidic residues. Over residues 1445–1504 (HPPTTTMQPTTTTTPLPTTTTPRPTTATTRRTTTTRRTTTRRPTTTVRTTTRTTTTTTPT) the composition is skewed to low complexity. The region spanning 1658–1752 (APRNITVVAV…PSVSFVTESD (95 aa)) is the Fibronectin type-III 5 domain. Asn1661 carries N-linked (GlcNAc...) asparagine glycosylation.

As to expression, almost absent from healthy skin; especially in epidermal keratinocytes, skin fibroblasts or endothelial cells and is barely detectable in benign melanocytic naevi. Expressed in the stroma close to skin tumors, in the tumor cells themselves and in the epidermis of psoriasis.

Its subcellular location is the secreted. Functionally, may be an activator of G protein signaling. The protein is Fibronectin type III domain-containing protein 1 (FNDC1) of Homo sapiens (Human).